Here is a 226-residue protein sequence, read N- to C-terminus: Killer cell lectin-like receptor subfamily E member 1 (226 aa).

A disordered region spans residues methionine 1 to threonine 28. Residues methionine 1–arginine 68 are Cytoplasmic-facing. Over residues threonine 7–lysine 18 the composition is skewed to polar residues. A helical; Signal-anchor for type II membrane protein transmembrane segment spans residues leucine 69 to threonine 89. The Extracellular segment spans residues threonine 90 to lysine 226. Disulfide bonds link cysteine 113/cysteine 124, cysteine 141/cysteine 224, and cysteine 202/cysteine 216. In terms of domain architecture, C-type lectin spans phenylalanine 120–lysine 225. N-linked (GlcNAc...) asparagine glycosylation occurs at asparagine 145.

In terms of assembly, heterodimer; with KLRI1 or KLRI2. As to expression, expressed in natural killer (NK) cells (at protein level). Also detected in natural killer T (NKT) cells (at protein level). Has little or no expression in T cells (at protein level).

It is found in the cell membrane. Lectin-like receptor for natural killer (NK) cells. Can either inhibit or activate NK cell cytotoxic activity, depending on its binding partner. Heterodimer formation with KLRI1 mediates NK cell inhibition whereas heterodimer formation with KLRI2 mediates NK cell activation. Plays a role in allogeneic recognition by the immune system. The sequence is that of Killer cell lectin-like receptor subfamily E member 1 from Mus musculus (Mouse).